The chain runs to 1332 residues: Xanthine dehydrogenase/oxidase (1332 aa).

The 2Fe-2S ferredoxin-type domain maps to 4–91; sequence DELVFFVNGK…HVAVTTVEGI (88 aa). [2Fe-2S] cluster-binding residues include cysteine 43, cysteine 48, cysteine 51, cysteine 73, cysteine 113, cysteine 116, cysteine 148, and cysteine 150. The 186-residue stretch at 229 to 414 folds into the FAD-binding PCMH-type domain; that stretch reads FEGERVTWIQ…LSIEIPYSRE (186 aa). Residues 257-264, phenylalanine 337, 347-351, aspartate 360, leucine 404, and lysine 422 contribute to the FAD site; these read LVVGNTEI and SLGGN. The cysteines at positions 535 and 992 are disulfide-linked. Positions 767 and 798 each coordinate Mo-molybdopterin. Residues glutamate 802 and arginine 880 each coordinate substrate. Arginine 912 is a Mo-molybdopterin binding site. Substrate contacts are provided by phenylalanine 914 and threonine 1010. Alanine 1079 contacts Mo-molybdopterin. Glutamate 1261 (proton acceptor) is an active-site residue.

It belongs to the xanthine dehydrogenase family. In terms of assembly, homodimer. Interacts with BTN1A1. [2Fe-2S] cluster is required as a cofactor. The cofactor is FAD. It depends on Mo-molybdopterin as a cofactor. Subject to partial proteolysis; this alters the enzyme from the dehydrogenase form (D) to the oxidase form (O). In terms of processing, contains sulfhydryl groups that are easily oxidized (in vitro); this alters the enzyme from the dehydrogenase form (D) to the oxidase form (O). In terms of tissue distribution, detected in milk (at protein level).

The protein localises to the cytoplasm. It is found in the peroxisome. The protein resides in the secreted. It catalyses the reaction xanthine + NAD(+) + H2O = urate + NADH + H(+). The enzyme catalyses hypoxanthine + NAD(+) + H2O = xanthine + NADH + H(+). It carries out the reaction xanthine + O2 + H2O = urate + H2O2. Can be converted from the dehydrogenase form (D) to the oxidase form (O) irreversibly by proteolysis or reversibly through the oxidation of sulfhydryl groups. In terms of biological role, key enzyme in purine degradation. Catalyzes the oxidation of hypoxanthine to xanthine. Catalyzes the oxidation of xanthine to uric acid. Contributes to the generation of reactive oxygen species. This Bos taurus (Bovine) protein is Xanthine dehydrogenase/oxidase (XDH).